The sequence spans 101 residues: Small ribosomal subunit protein uS14 (101 aa).

It belongs to the universal ribosomal protein uS14 family. Part of the 30S ribosomal subunit. Contacts proteins S3 and S10.

Functionally, binds 16S rRNA, required for the assembly of 30S particles and may also be responsible for determining the conformation of the 16S rRNA at the A site. The chain is Small ribosomal subunit protein uS14 from Brucella anthropi (strain ATCC 49188 / DSM 6882 / CCUG 24695 / JCM 21032 / LMG 3331 / NBRC 15819 / NCTC 12168 / Alc 37) (Ochrobactrum anthropi).